Here is a 133-residue protein sequence, read N- to C-terminus: Small ribosomal subunit protein uS8c (133 aa).

Belongs to the universal ribosomal protein uS8 family. As to quaternary structure, part of the 30S ribosomal subunit.

Its subcellular location is the plastid. The protein resides in the chloroplast. In terms of biological role, one of the primary rRNA binding proteins, it binds directly to 16S rRNA central domain where it helps coordinate assembly of the platform of the 30S subunit. The chain is Small ribosomal subunit protein uS8c (rps8) from Pyropia yezoensis (Susabi-nori).